A 183-amino-acid polypeptide reads, in one-letter code: Probable chorismate pyruvate-lyase 2 (183 aa).

Arginine 76, leucine 114, and glutamate 166 together coordinate substrate.

It belongs to the UbiC family.

The protein resides in the cytoplasm. It catalyses the reaction chorismate = 4-hydroxybenzoate + pyruvate. The protein operates within cofactor biosynthesis; ubiquinone biosynthesis. In terms of biological role, removes the pyruvyl group from chorismate, with concomitant aromatization of the ring, to provide 4-hydroxybenzoate (4HB) for the ubiquinone pathway. This chain is Probable chorismate pyruvate-lyase 2, found in Pseudomonas fluorescens (strain Pf0-1).